The sequence spans 143 residues: Transcriptional regulator MraZ (143 aa).

SpoVT-AbrB domains lie at Glu-5 to Glu-47 and Ala-76 to Arg-119.

The protein belongs to the MraZ family. Forms oligomers.

The protein localises to the cytoplasm. It is found in the nucleoid. The polypeptide is Transcriptional regulator MraZ (Levilactobacillus brevis (strain ATCC 367 / BCRC 12310 / CIP 105137 / JCM 1170 / LMG 11437 / NCIMB 947 / NCTC 947) (Lactobacillus brevis)).